Reading from the N-terminus, the 1580-residue chain is Dynamin-binding protein (1580 aa).

M1 carries the post-translational modification N-acetylmethionine. 3 SH3 domains span residues 2 to 61, 66 to 127, and 146 to 205; these read EPGS…IVTI, EGER…ELCL, and YSLG…LLGP. Disordered stretches follow at residues 211 to 245, 304 to 446, 500 to 546, and 589 to 688; these read ESVN…DQQS, NRTE…LVPL, YAQK…DSLD, and RGSS…AQTF. A compositionally biased stretch (acidic residues) spans 229-243; sequence VPPEEAESGGDEDDQ. In terms of domain architecture, SH3 4 spans 244–303; that stretch reads QSGTYGIALYRFQALETNELDFEVGDRIQILGTLEDGWLEGCLKGKTGVFPHRFVKLCPS. Polar residues-rich tracts occupy residues 422–439 and 502–513; these read QKSQ…TSDP and QKHQTSTENTAS. Residues 516-527 show a composition bias toward basic and acidic residues; sequence DPPERPERRPGL. Residues 608–617 show a composition bias toward pro residues; the sequence is RPPPPRPRTP. A compositionally biased stretch (basic and acidic residues) spans 671–682; the sequence is APEKEDSEHMEK. The residue at position 683 (S683) is a Phosphoserine. Positions 694–755 form a coiled coil; that stretch reads LARIRDVEQD…LELQQLRDMT (62 aa). The DH domain maps to 783 to 970; sequence KRAKVVAELL…KEINVNINEY (188 aa). The BAR domain maps to 1011 to 1220; that stretch reads LKHLTGFAPQ…LKATDREGNL (210 aa). The 64-residue stretch at 1288–1351 folds into the SH3 5 domain; sequence PPEKLFHVQR…YSSFLKPYNP (64 aa). The span at 1356–1365 shows a compositional bias: low complexity; it reads SDASVASHSS. Disordered stretches follow at residues 1356–1384 and 1426–1514; these read SDAS…NSHS and TGHP…GSSE. The span at 1426 to 1440 shows a compositional bias: polar residues; it reads TGHPETGPSTCSSDP. The region spanning 1516 to 1579 is the SH3 6 domain; that stretch reads EGNQVYFAIY…PSNYIRKTEY (64 aa).

In terms of assembly, binds DNM1 via its N-terminal SH3 domains. The C-terminal SH3 domain binds a complex containing actin, tubulin, Hsp70 and actin-regulatory proteins, such as ENAH, EVL, WIRE, CR16, WAVE1 and NAP1L1. Interacts with FASLG. Interacts (via SH3 domain 6) with WASL. Interacts (via SH3 domain 6) interacts with ENAH. Interacts (via C-terminal domain) with TJP1; required for the apical cell-cell junction localization of DNMBP.

The protein resides in the cytoplasm. It is found in the golgi apparatus. The protein localises to the golgi stack. It localises to the cytoskeleton. Its subcellular location is the synapse. The protein resides in the cell junction. Plays a critical role as a guanine nucleotide exchange factor (GEF) for CDC42 in several intracellular processes associated with the actin and microtubule cytoskeleton. Regulates the structure of apical junctions in epithelial cells. Participates in the normal lumenogenesis of epithelial cell cysts by regulating spindle orientation. Plays a role in ciliogenesis. May play a role in membrane trafficking between the cell surface and the Golgi. The protein is Dynamin-binding protein of Mus musculus (Mouse).